We begin with the raw amino-acid sequence, 371 residues long: Ribosomal RNA small subunit methyltransferase H (371 aa).

Residues 43 to 45 (GGH), Asp-62, Leu-96, Asp-110, and Gln-117 contribute to the S-adenosyl-L-methionine site. The disordered stretch occupies residues 315 to 371 (AAERLDPTQQQRQRTDRERYRRQVRAMHQPGTGSAVRRPVSGDDGTGTDEEGEGHDD). The segment covering 360–371 (TGTDEEGEGHDD) has biased composition (acidic residues).

This sequence belongs to the methyltransferase superfamily. RsmH family.

The protein localises to the cytoplasm. The catalysed reaction is cytidine(1402) in 16S rRNA + S-adenosyl-L-methionine = N(4)-methylcytidine(1402) in 16S rRNA + S-adenosyl-L-homocysteine + H(+). Specifically methylates the N4 position of cytidine in position 1402 (C1402) of 16S rRNA. The polypeptide is Ribosomal RNA small subunit methyltransferase H (Salinispora tropica (strain ATCC BAA-916 / DSM 44818 / JCM 13857 / NBRC 105044 / CNB-440)).